The primary structure comprises 413 residues: Chemotactic signal transduction system substrate-binding protein BasB (413 aa).

An N-terminal signal peptide occupies residues 1-31; that stretch reads MHSTTRREWLGAIGATAATGLAGCAGVGGAG.

The protein localises to the cell membrane. Functionally, mediates chemotaxis towards five attractant amino acids (leucine, isoleucine, valine, methionine and cysteine). May function as a receptor that binds the amino acids and transduces a signal to BasT. Has probably no additional role in transport. This chain is Chemotactic signal transduction system substrate-binding protein BasB (basB), found in Halobacterium salinarum (strain ATCC 29341 / DSM 671 / R1).